The sequence spans 127 residues: Riboflavin kinase (127 aa).

A CDP-binding site is contributed by 10-15 (GLGEGR). Positions 39 and 41 each coordinate Mg(2+). FMN contacts are provided by T96 and E104. 109 to 112 (VHLR) contacts CDP.

This sequence belongs to the archaeal riboflavin kinase family. Mg(2+) is required as a cofactor.

The catalysed reaction is riboflavin + CTP = CDP + FMN + H(+). The protein operates within cofactor biosynthesis; FMN biosynthesis; FMN from riboflavin (CTP route): step 1/1. Functionally, catalyzes the CTP-dependent phosphorylation of riboflavin (vitamin B2) to form flavin mononucleotide (FMN). This chain is Riboflavin kinase, found in Methanococcus maripaludis (strain C7 / ATCC BAA-1331).